The sequence spans 123 residues: UPF0102 protein CLD_2200 (123 aa).

This sequence belongs to the UPF0102 family.

The polypeptide is UPF0102 protein CLD_2200 (Clostridium botulinum (strain Okra / Type B1)).